Consider the following 292-residue polypeptide: Probable ABC transporter permease protein YurN (292 aa).

6 helical membrane-spanning segments follow: residues 7–27 (IIPYLFLVPALVFLLFVYIPI), 70–90 (VLYAVISIVCQVFGGLILAAV), 106–126 (VFFLPVVISMTVIALLFDFIY), 160–180 (VIFVSQWQSVGYIAMLYIVSI), 215–235 (FVAVVMTLTGAFTVFNEPYIL), and 260–280 (MMGYASAIATVVLIITLALSL). The region spanning 66–282 (LTNNVLYAVI…IITLALSLMQ (217 aa)) is the ABC transmembrane type-1 domain.

The protein belongs to the binding-protein-dependent transport system permease family. MalFG subfamily.

Its subcellular location is the cell membrane. In terms of biological role, probably part of the binding-protein-dependent transport system YurMNO. Probably responsible for the translocation of the substrate across the membrane. This Bacillus subtilis (strain 168) protein is Probable ABC transporter permease protein YurN (yurN).